The primary structure comprises 90 residues: Small ribosomal subunit protein bS16 (90 aa).

The protein belongs to the bacterial ribosomal protein bS16 family.

In Streptococcus pyogenes serotype M4 (strain MGAS10750), this protein is Small ribosomal subunit protein bS16.